Here is a 255-residue protein sequence, read N- to C-terminus: Large ribosomal subunit protein uL2 (255 aa).

A disordered region spans residues 201–229 (YAHPHGGGSHQQGGTPVKKNAPPGQKVGF).

It belongs to the universal ribosomal protein uL2 family. In terms of assembly, part of the 50S ribosomal subunit. Forms a bridge to the 30S subunit in the 70S ribosome.

In terms of biological role, one of the primary rRNA binding proteins. Required for association of the 30S and 50S subunits to form the 70S ribosome, for tRNA binding and peptide bond formation. It has been suggested to have peptidyltransferase activity; this is somewhat controversial. Makes several contacts with the 16S rRNA in the 70S ribosome. The polypeptide is Large ribosomal subunit protein uL2 (Caldivirga maquilingensis (strain ATCC 700844 / DSM 13496 / JCM 10307 / IC-167)).